A 189-amino-acid chain; its full sequence is Ribosome maturation factor RimM (189 aa).

The 75-residue stretch at 95–169 folds into the PRC barrel domain; that stretch reads DEDEFFQTDL…IIKVEPHAAG (75 aa). Residues 168–189 are disordered; it reads AGLIADEHDNPPHESGKKPKKP. The segment covering 172 to 189 has biased composition (basic and acidic residues); it reads ADEHDNPPHESGKKPKKP.

The protein belongs to the RimM family. In terms of assembly, binds ribosomal protein uS19.

The protein resides in the cytoplasm. In terms of biological role, an accessory protein needed during the final step in the assembly of 30S ribosomal subunit, possibly for assembly of the head region. Essential for efficient processing of 16S rRNA. May be needed both before and after RbfA during the maturation of 16S rRNA. It has affinity for free ribosomal 30S subunits but not for 70S ribosomes. In Brucella abortus (strain S19), this protein is Ribosome maturation factor RimM.